The primary structure comprises 306 residues: D-alanine--D-alanine ligase (306 aa).

The ATP-grasp domain maps to 107–300 (KEAYRAAGLP…FGQLCAWMVE (194 aa)). Residue 134–184 (MQPPYVVKPYNEGSSVGVYIVTEAANGPPVLAPDLPATLMVEEYVPGRELS) participates in ATP binding. The Mg(2+) site is built by aspartate 251, glutamate 267, and asparagine 269.

This sequence belongs to the D-alanine--D-alanine ligase family. Mg(2+) is required as a cofactor. It depends on Mn(2+) as a cofactor.

It is found in the cytoplasm. It carries out the reaction 2 D-alanine + ATP = D-alanyl-D-alanine + ADP + phosphate + H(+). The protein operates within cell wall biogenesis; peptidoglycan biosynthesis. In terms of biological role, cell wall formation. In Ruegeria pomeroyi (strain ATCC 700808 / DSM 15171 / DSS-3) (Silicibacter pomeroyi), this protein is D-alanine--D-alanine ligase.